The primary structure comprises 172 residues: uncharacterized protein (172 aa).

This is an uncharacterized protein from Haemophilus influenzae (strain ATCC 51907 / DSM 11121 / KW20 / Rd).